The primary structure comprises 356 residues: Outer spore wall protein LDS2 (356 aa).

The Cytoplasmic portion of the chain corresponds to methionine 1 to tyrosine 92. Residues leucine 93–phenylalanine 113 form a helical membrane-spanning segment. Residues threonine 114 to serine 115 are Extracellular-facing. The helical transmembrane segment at isoleucine 116–proline 136 threads the bilayer. Topologically, residues leucine 137–glutamine 213 are cytoplasmic. A helical transmembrane segment spans residues phenylalanine 214–valine 234. The Extracellular segment spans residues proline 235–serine 294. The helical transmembrane segment at isoleucine 295–valine 315 threads the bilayer. Residues lysine 316–proline 356 lie on the Cytoplasmic side of the membrane. The interval aspartate 322–proline 356 is disordered. Polar residues predominate over residues isoleucine 346–proline 356.

The protein belongs to the LDS family.

It localises to the prospore membrane. The protein localises to the lipid droplet. Its subcellular location is the spore wall. In terms of biological role, involved in spore wall assembly. The polypeptide is Outer spore wall protein LDS2 (Saccharomyces cerevisiae (strain ATCC 204508 / S288c) (Baker's yeast)).